The primary structure comprises 190 residues: MSIILGIDPGSRVTGYGVIRQTGKHLEYLGSGAIRTQVEDLPTRLKRIYAGVTEIITQFQPNMFAIEQVFMAKNADSALKLGQARGTAIVAAVNNDLPVFEYAARLVKQTVVGIGSADKVQVQEMVTRILKLSDKPQADAADALAIAITHAHSIQHSLHIANSVKMTETQEKMTALLKTRYSRGRFRLKI.

Catalysis depends on residues Asp-8, Glu-67, and Asp-139. 3 residues coordinate Mg(2+): Asp-8, Glu-67, and Asp-139.

Belongs to the RuvC family. Homodimer which binds Holliday junction (HJ) DNA. The HJ becomes 2-fold symmetrical on binding to RuvC with unstacked arms; it has a different conformation from HJ DNA in complex with RuvA. In the full resolvosome a probable DNA-RuvA(4)-RuvB(12)-RuvC(2) complex forms which resolves the HJ. Requires Mg(2+) as cofactor.

It is found in the cytoplasm. The enzyme catalyses Endonucleolytic cleavage at a junction such as a reciprocal single-stranded crossover between two homologous DNA duplexes (Holliday junction).. The RuvA-RuvB-RuvC complex processes Holliday junction (HJ) DNA during genetic recombination and DNA repair. Endonuclease that resolves HJ intermediates. Cleaves cruciform DNA by making single-stranded nicks across the HJ at symmetrical positions within the homologous arms, yielding a 5'-phosphate and a 3'-hydroxyl group; requires a central core of homology in the junction. The consensus cleavage sequence is 5'-(A/T)TT(C/G)-3'. Cleavage occurs on the 3'-side of the TT dinucleotide at the point of strand exchange. HJ branch migration catalyzed by RuvA-RuvB allows RuvC to scan DNA until it finds its consensus sequence, where it cleaves and resolves the cruciform DNA. In Haemophilus influenzae (strain ATCC 51907 / DSM 11121 / KW20 / Rd), this protein is Crossover junction endodeoxyribonuclease RuvC.